The chain runs to 54 residues: Relaxin (54 aa).

Glutamine 1 is modified (pyrrolidone carboxylic acid). 3 cysteine pairs are disulfide-bonded: cysteine 13–cysteine 41, cysteine 25–cysteine 54, and cysteine 40–cysteine 45.

It belongs to the insulin family. Heterodimer of a B chain and an A chain linked by two disulfide bonds.

The protein resides in the secreted. The function of relaxin in an oviparous species is not yet known. This chain is Relaxin, found in Squalus acanthias (Spiny dogfish).